The following is a 381-amino-acid chain: Dual-specificity RNA methyltransferase RlmN (381 aa).

Glutamate 95 acts as the Proton acceptor in catalysis. One can recognise a Radical SAM core domain in the interval 101-347 (EDDRGTLCVS…TTVRKTRGDD (247 aa)). A disulfide bridge connects residues cysteine 108 and cysteine 352. [4Fe-4S] cluster-binding residues include cysteine 115, cysteine 119, and cysteine 122. S-adenosyl-L-methionine-binding positions include 178-179 (GE), serine 210, 232-234 (SLH), and asparagine 309. Cysteine 352 acts as the S-methylcysteine intermediate in catalysis.

This sequence belongs to the radical SAM superfamily. RlmN family. [4Fe-4S] cluster serves as cofactor.

The protein resides in the cytoplasm. The enzyme catalyses adenosine(2503) in 23S rRNA + 2 reduced [2Fe-2S]-[ferredoxin] + 2 S-adenosyl-L-methionine = 2-methyladenosine(2503) in 23S rRNA + 5'-deoxyadenosine + L-methionine + 2 oxidized [2Fe-2S]-[ferredoxin] + S-adenosyl-L-homocysteine. It catalyses the reaction adenosine(37) in tRNA + 2 reduced [2Fe-2S]-[ferredoxin] + 2 S-adenosyl-L-methionine = 2-methyladenosine(37) in tRNA + 5'-deoxyadenosine + L-methionine + 2 oxidized [2Fe-2S]-[ferredoxin] + S-adenosyl-L-homocysteine. Functionally, specifically methylates position 2 of adenine 2503 in 23S rRNA and position 2 of adenine 37 in tRNAs. m2A2503 modification seems to play a crucial role in the proofreading step occurring at the peptidyl transferase center and thus would serve to optimize ribosomal fidelity. The sequence is that of Dual-specificity RNA methyltransferase RlmN from Bordetella petrii (strain ATCC BAA-461 / DSM 12804 / CCUG 43448).